Here is a 318-residue protein sequence, read N- to C-terminus: UAP56-interacting factor (318 aa).

Position 1 is an N-acetylmethionine (Met1). The disordered stretch occupies residues 1–27; it reads MNRFSTRLMGATATPPPAPPKARSNEN. Residue Thr14 is modified to Phosphothreonine. Position 24 is a phosphoserine (Ser24). The short motif at 27–45 is the UAP56-binding motif element; sequence NLDKIDMSLDDIIKLNRKE. Phosphoserine occurs at positions 61 and 118. Lys140 is covalently cross-linked (Glycyl lysine isopeptide (Lys-Gly) (interchain with G-Cter in SUMO1)). Polar residues predominate over residues 163–180; sequence LNRKNNIPNNFTRSGNKL. Residues 163-183 are disordered; sequence LNRKNNIPNNFTRSGNKLSHQ. Lys261 is covalently cross-linked (Glycyl lysine isopeptide (Lys-Gly) (interchain with G-Cter in SUMO2)).

The protein belongs to the UIF family. As to quaternary structure, interacts with DDX39B/UAP56 and NXF1; interaction with DDX39B/UAP56 and NXF1 are mutually exclusive. Interacts with SSRP1; required for its recruitment to mRNAs. Interacts with CHTOP.

Its subcellular location is the nucleus. It localises to the nucleoplasm. The protein resides in the nucleus speckle. Required for mRNA export from the nucleus to the cytoplasm. Acts as an adapter that uses the DDX39B/UAP56-NFX1 pathway to ensure efficient mRNA export and delivering to the nuclear pore. Associates with spliced and unspliced mRNAs simultaneously with ALYREF/THOC4. The polypeptide is UAP56-interacting factor (FYTTD1) (Bos taurus (Bovine)).